A 154-amino-acid polypeptide reads, in one-letter code: 3-hydroxyacyl-[acyl-carrier-protein] dehydratase FabZ (154 aa).

Residue histidine 59 is part of the active site.

It belongs to the thioester dehydratase family. FabZ subfamily.

Its subcellular location is the cytoplasm. The catalysed reaction is a (3R)-hydroxyacyl-[ACP] = a (2E)-enoyl-[ACP] + H2O. Functionally, involved in unsaturated fatty acids biosynthesis. Catalyzes the dehydration of short chain beta-hydroxyacyl-ACPs and long chain saturated and unsaturated beta-hydroxyacyl-ACPs. In Bartonella bacilliformis (strain ATCC 35685 / KC583 / Herrer 020/F12,63), this protein is 3-hydroxyacyl-[acyl-carrier-protein] dehydratase FabZ.